The chain runs to 92 residues: Small ribosomal subunit protein bS16 (92 aa).

It belongs to the bacterial ribosomal protein bS16 family.

The polypeptide is Small ribosomal subunit protein bS16 (Desulforudis audaxviator (strain MP104C)).